A 508-amino-acid polypeptide reads, in one-letter code: MRCPKSAVTMRNEELLLSNGTANKMNGALDHSDQPDPDAIKMFVGQIPRSWSEKELKELFEPYGAVYQINVLRDRSQNPPQSKGCCFVTFYTRKAALEAQNALHNIKTLPGMHHPIQMKPADSEKSNAVEDRKLFIGMVSKKCNENDIRVMFSPFGQIEECRILRGPDGLSRGCAFVTFSTRAMAQNAIKAMHQSQTMEGCSSPIVVKFADTQKDKEQRRLQQQLAQQMQQLNTATWGNLTGLGGLTPQYLALLQQATSSSNLGAFSGIQQMAGMNALQLQNLATLAAAAAAAQTSATSTNANPLSSTSSALGALTSPVAASTPNSTAGAAMNSLTSLGTLQGLAGATVGLNNINALAGMAALNGGLGATGLTNGTAGTMDALTQAYSGIQQYAAAALPTLYSQSLLQQQSAAGSQKEGPEGANLFIYHLPQEFGDQDILQMFMPFGNVISAKVFIDKQTNLSKCFGFVSYDNPVSAQAAIQAMNGFQIGMKRLKVQLKRSKNDSKPY.

Necessary for RNA-binding, TNNT2 exon 5 and NMDA R1 exon 21 inclusion stretches follow at residues 1-283 (MRCP…LQNL) and 357-508 (LAGM…SKPY). RRM domains follow at residues 40–123 (IKMF…PADS), 132–212 (RKLF…FADT), and 423–501 (ANLF…LKRS).

The protein belongs to the CELF/BRUNOL family. Interacts with A1CF. Expressed in tongue, spleen and brain (at protein level). Expressed in liver, thigh, stomach, lung and heart to very low levels (at protein level). Expressed in heart, brain, lung and muscle.

It localises to the nucleus. Its subcellular location is the cytoplasm. RNA-binding protein implicated in the regulation of several post-transcriptional events. Involved in pre-mRNA alternative splicing, mRNA translation and stability. Mediates exon inclusion and/or exclusion in pre-mRNA that are subject to tissue-specific and developmentally regulated alternative splicing. Specifically activates exon 5 inclusion of TNNT2 in embryonic, but not adult, skeletal muscle. Activates TNNT2 exon 5 inclusion by antagonizing the repressive effect of PTB. Acts both as an activator and as a repressor of a pair of coregulated exons: promotes inclusion of the smooth muscle (SM) exon but exclusion of the non-muscle (NM) exon in actinin pre-mRNAs. Promotes inclusion of exonS 21 and exclusion of exon 5 of the NMDA receptor R1 pre-mRNA. Involved in the apoB RNA editing activity. Increases COX2 mRNA stability and inhibits COX2 mRNA translation in epithelial cells after radiation injury. Modulates the cellular apoptosis program by regulating COX2-mediated prostaglandin E2 (PGE2) expression. Binds to (CUG)n triplet repeats in the 3'-UTR of transcripts such as DMPK. Binds to the muscle-specific splicing enhancer (MSE) intronic sites flanking the TNNT2 alternative exon 5. Binds preferentially to UG-rich sequences, in particular UG repeat and UGUU motifs. Binds to apoB mRNA, specifically to AU-rich sequences located immediately upstream of the edited cytidine. Binds AU-rich sequences in the 3'-UTR of COX2 mRNA. Binds to an intronic RNA element responsible for the silencing of exon 21 splicing. Binds to (CUG)n repeats. May be a specific regulator of miRNA biogenesis. Binds to primary microRNA pri-MIR140 and, with CELF1, negatively regulates the processing to mature miRNA. The chain is CUGBP Elav-like family member 2 (Celf2) from Mus musculus (Mouse).